The primary structure comprises 105 residues: Small ribosomal subunit protein uS10 (105 aa).

It belongs to the universal ribosomal protein uS10 family. In terms of assembly, part of the 30S ribosomal subunit.

Its function is as follows. Involved in the binding of tRNA to the ribosomes. This Synechococcus sp. (strain JA-3-3Ab) (Cyanobacteria bacterium Yellowstone A-Prime) protein is Small ribosomal subunit protein uS10.